We begin with the raw amino-acid sequence, 347 residues long: Phosphoribosylformylglycinamidine cyclo-ligase (347 aa).

The protein belongs to the AIR synthase family.

The protein localises to the cytoplasm. It catalyses the reaction 2-formamido-N(1)-(5-O-phospho-beta-D-ribosyl)acetamidine + ATP = 5-amino-1-(5-phospho-beta-D-ribosyl)imidazole + ADP + phosphate + H(+). It participates in purine metabolism; IMP biosynthesis via de novo pathway; 5-amino-1-(5-phospho-D-ribosyl)imidazole from N(2)-formyl-N(1)-(5-phospho-D-ribosyl)glycinamide: step 2/2. The polypeptide is Phosphoribosylformylglycinamidine cyclo-ligase (Dechloromonas aromatica (strain RCB)).